The chain runs to 146 residues: Large ribosomal subunit protein uL15 (146 aa).

A disordered region spans residues 1–57; sequence MKLFELQPAPGSKKLPKRKGRGHGTGNGKTAGRGHKGQNARSGGGVRPGFEGGQMPL. A compositionally biased stretch (gly residues) spans 42–52; sequence SGGGVRPGFEG.

This sequence belongs to the universal ribosomal protein uL15 family. In terms of assembly, part of the 50S ribosomal subunit.

Functionally, binds to the 23S rRNA. This Acetivibrio thermocellus (strain ATCC 27405 / DSM 1237 / JCM 9322 / NBRC 103400 / NCIMB 10682 / NRRL B-4536 / VPI 7372) (Clostridium thermocellum) protein is Large ribosomal subunit protein uL15.